A 151-amino-acid polypeptide reads, in one-letter code: UPF0208 membrane protein KPN78578_26420 (151 aa).

2 helical membrane passes run 46–65 and 69–91; these read YAIR…QIAL and LGPA…WWLG.

The protein belongs to the UPF0208 family.

It is found in the cell inner membrane. This Klebsiella pneumoniae subsp. pneumoniae (strain ATCC 700721 / MGH 78578) protein is UPF0208 membrane protein KPN78578_26420.